A 459-amino-acid polypeptide reads, in one-letter code: Putative BTB/POZ domain-containing protein R541 (459 aa).

The BTB domain maps to 76–143 (NHITINVGGK…NQKSTNIELY (68 aa)).

The protein belongs to the mimivirus BTB/WD family.

This chain is Putative BTB/POZ domain-containing protein R541, found in Acanthamoeba polyphaga mimivirus (APMV).